We begin with the raw amino-acid sequence, 1198 residues long: Tetratricopeptide repeat protein 17 (1198 aa).

The stretch at 313–346 (LTSHYTLGNIYAMLGEYNHSVLCYEQALQAQPGF) is one TPR 1 repeat. Residues 358–399 (CQQKLEQRLEAQHRSLQRTLNELKEYQKQHDHYLRQQEMLDK) are a coiled coil. TPR repeat units follow at residues 630-663 (WMMQNEAGLFWRAKGNGTQALVCLRQALHSAPPQ) and 700-733 (PHTLLSLVNVHLSQGNLTGALAVFRQALSLSVHC). Disordered stretches follow at residues 771-792 (DSELEDWDTGSSSSGRQEVWDS) and 814-839 (NGSGEASGQDRTREPKAEGGEEEEQD). The span at 821-832 (GQDRTREPKAEG) shows a compositional bias: basic and acidic residues. 3 TPR repeats span residues 1071–1105 (SWVLSSMAALYWRVKGQGKRAIDCLRQALNYAPHH), 1108–1141 (DVPLISLANIFQNARLWEDALTVARMAVEIAPHF), and 1142–1175 (VVNHFTLANVYIAMEEFEKAMHWYESTLKLQPEF).

It belongs to the TTC17 family.

The protein localises to the cytoplasm. It is found in the cell membrane. Its subcellular location is the cytoskeleton. Plays a role in primary ciliogenesis by modulating actin polymerization. The protein is Tetratricopeptide repeat protein 17 (ttc17) of Danio rerio (Zebrafish).